A 321-amino-acid chain; its full sequence is Lipoyl synthase (321 aa).

7 residues coordinate [4Fe-4S] cluster: cysteine 60, cysteine 65, cysteine 71, cysteine 86, cysteine 90, cysteine 93, and serine 299. The Radical SAM core domain maps to 72–288; that stretch reads WEKKHATFMI…ETIGRTKGFL (217 aa).

The protein belongs to the radical SAM superfamily. Lipoyl synthase family. [4Fe-4S] cluster serves as cofactor.

It is found in the cytoplasm. It catalyses the reaction [[Fe-S] cluster scaffold protein carrying a second [4Fe-4S](2+) cluster] + N(6)-octanoyl-L-lysyl-[protein] + 2 oxidized [2Fe-2S]-[ferredoxin] + 2 S-adenosyl-L-methionine + 4 H(+) = [[Fe-S] cluster scaffold protein] + N(6)-[(R)-dihydrolipoyl]-L-lysyl-[protein] + 4 Fe(3+) + 2 hydrogen sulfide + 2 5'-deoxyadenosine + 2 L-methionine + 2 reduced [2Fe-2S]-[ferredoxin]. It functions in the pathway protein modification; protein lipoylation via endogenous pathway; protein N(6)-(lipoyl)lysine from octanoyl-[acyl-carrier-protein]: step 2/2. Its function is as follows. Catalyzes the radical-mediated insertion of two sulfur atoms into the C-6 and C-8 positions of the octanoyl moiety bound to the lipoyl domains of lipoate-dependent enzymes, thereby converting the octanoylated domains into lipoylated derivatives. The chain is Lipoyl synthase from Brucella anthropi (strain ATCC 49188 / DSM 6882 / CCUG 24695 / JCM 21032 / LMG 3331 / NBRC 15819 / NCTC 12168 / Alc 37) (Ochrobactrum anthropi).